The chain runs to 297 residues: UPF0761 membrane protein VC0395_A2314/VC395_2854 (297 aa).

A run of 6 helical transmembrane segments spans residues 43 to 63 (LLSMVPMLTVLLSILSSFALF), 100 to 120 (MTAVGGAFLFVAAIMLISNID), 135 to 155 (AVFSFSMYWMILTLGPILVGA), 181 to 201 (FLRWLPFVLSYCAFVGLYLLV), 213 to 233 (LGALIAAILFELSKKGFAAYI), and 245 to 265 (ALAAIPILFVWVYLCWLIVLV).

The protein belongs to the UPF0761 family.

Its subcellular location is the cell inner membrane. The protein is UPF0761 membrane protein VC0395_A2314/VC395_2854 of Vibrio cholerae serotype O1 (strain ATCC 39541 / Classical Ogawa 395 / O395).